Consider the following 454-residue polypeptide: Tubulin alpha-A chain (454 aa).

GTP contacts are provided by Q12, D72, S141, G145, T146, T180, N207, and N229. Residue D72 participates in Mg(2+) binding. Residue E255 is part of the active site.

Belongs to the tubulin family. Dimer of alpha and beta chains. A typical microtubule is a hollow water-filled tube with an outer diameter of 25 nm and an inner diameter of 15 nM. Alpha-beta heterodimers associate head-to-tail to form protofilaments running lengthwise along the microtubule wall with the beta-tubulin subunit facing the microtubule plus end conferring a structural polarity. Microtubules usually have 13 protofilaments but different protofilament numbers can be found in some organisms and specialized cells. It depends on Mg(2+) as a cofactor.

The protein localises to the cytoplasm. Its subcellular location is the cytoskeleton. It carries out the reaction GTP + H2O = GDP + phosphate + H(+). Functionally, tubulin is the major constituent of microtubules, a cylinder consisting of laterally associated linear protofilaments composed of alpha- and beta-tubulin heterodimers. Microtubules grow by the addition of GTP-tubulin dimers to the microtubule end, where a stabilizing cap forms. Below the cap, tubulin dimers are in GDP-bound state, owing to GTPase activity of alpha-tubulin. In Neurospora crassa (strain ATCC 24698 / 74-OR23-1A / CBS 708.71 / DSM 1257 / FGSC 987), this protein is Tubulin alpha-A chain (tba-1).